The chain runs to 877 residues: Leucine--tRNA ligase (877 aa).

Residues 43 to 53 (PYPSGRIHMGH) carry the 'HIGH' region motif. The 'KMSKS' region motif lies at 628 to 632 (KMSKS). Residue Lys-631 participates in ATP binding.

The protein belongs to the class-I aminoacyl-tRNA synthetase family.

The protein localises to the cytoplasm. The enzyme catalyses tRNA(Leu) + L-leucine + ATP = L-leucyl-tRNA(Leu) + AMP + diphosphate. The polypeptide is Leucine--tRNA ligase (Brucella melitensis biotype 2 (strain ATCC 23457)).